Reading from the N-terminus, the 360-residue chain is Phospho-N-acetylmuramoyl-pentapeptide-transferase (360 aa).

The next 10 membrane-spanning stretches (helical) occupy residues 26–46 (AVLSLLTALLLSLWIGPKMIL), 73–93 (TMGGIMILATITASSLLWGDL), 94–114 (SNPYIWCSLFVLLGYGAIGFV), 132–152 (WKYFWLSVVAFIAVFTMYMIG), 168–188 (IMPQLGLFYIVLAYFVIVGTS), 199–219 (GLAIMPTVFVAGAFAIIAWAT), 239–259 (LVIFCTAIVGAGLGFLWFNTY), 263–283 (VFMGDVGSLALGGALGVIAVL), 288–308 (FLLVIMGGVFVMETVSVILQV), and 338–358 (VIIRFWIISLMLVLLGLVTLK).

It belongs to the glycosyltransferase 4 family. MraY subfamily. Mg(2+) serves as cofactor.

It is found in the cell inner membrane. It catalyses the reaction UDP-N-acetyl-alpha-D-muramoyl-L-alanyl-gamma-D-glutamyl-meso-2,6-diaminopimeloyl-D-alanyl-D-alanine + di-trans,octa-cis-undecaprenyl phosphate = di-trans,octa-cis-undecaprenyl diphospho-N-acetyl-alpha-D-muramoyl-L-alanyl-D-glutamyl-meso-2,6-diaminopimeloyl-D-alanyl-D-alanine + UMP. It functions in the pathway cell wall biogenesis; peptidoglycan biosynthesis. Catalyzes the initial step of the lipid cycle reactions in the biosynthesis of the cell wall peptidoglycan: transfers peptidoglycan precursor phospho-MurNAc-pentapeptide from UDP-MurNAc-pentapeptide onto the lipid carrier undecaprenyl phosphate, yielding undecaprenyl-pyrophosphoryl-MurNAc-pentapeptide, known as lipid I. The sequence is that of Phospho-N-acetylmuramoyl-pentapeptide-transferase from Actinobacillus succinogenes (strain ATCC 55618 / DSM 22257 / CCUG 43843 / 130Z).